The following is a 178-amino-acid chain: Small ribosomal subunit protein uS4 (178 aa).

In terms of domain architecture, S4 RNA-binding spans 104 to 166 (RRLQTIVFRK…SNSPMASENH (63 aa)). Residues 158–178 (NSPMASENHPERTAATSEENQ) form a disordered region.

It belongs to the universal ribosomal protein uS4 family. As to quaternary structure, part of the 30S ribosomal subunit. Contacts protein S5. The interaction surface between S4 and S5 is involved in control of translational fidelity.

Functionally, one of the primary rRNA binding proteins, it binds directly to 16S rRNA where it nucleates assembly of the body of the 30S subunit. With S5 and S12 plays an important role in translational accuracy. The sequence is that of Small ribosomal subunit protein uS4 from Methanococcus maripaludis (strain DSM 14266 / JCM 13030 / NBRC 101832 / S2 / LL).